Reading from the N-terminus, the 88-residue chain is Defensin-like protein 24 (88 aa).

Positions 1-23 are cleaved as a signal peptide; the sequence is MASSKFVLFAILALSLLLSGTEA. 4 cysteine pairs are disulfide-bonded: Cys37–Cys87, Cys47–Cys72, Cys56–Cys83, and Cys60–Cys85.

The protein belongs to the DEFL family.

It localises to the secreted. The protein is Defensin-like protein 24 of Arabidopsis thaliana (Mouse-ear cress).